We begin with the raw amino-acid sequence, 188 residues long: Elongation factor P (188 aa).

The protein belongs to the elongation factor P family.

The protein resides in the cytoplasm. Its pathway is protein biosynthesis; polypeptide chain elongation. Functionally, involved in peptide bond synthesis. Stimulates efficient translation and peptide-bond synthesis on native or reconstituted 70S ribosomes in vitro. Probably functions indirectly by altering the affinity of the ribosome for aminoacyl-tRNA, thus increasing their reactivity as acceptors for peptidyl transferase. This Rhodopseudomonas palustris (strain BisA53) protein is Elongation factor P.